We begin with the raw amino-acid sequence, 454 residues long: Probable diacyglycerol O-acyltransferase tgs2 (454 aa).

Histidine 139 functions as the Proton acceptor in the catalytic mechanism.

It belongs to the long-chain O-acyltransferase family.

The catalysed reaction is an acyl-CoA + a 1,2-diacyl-sn-glycerol = a triacyl-sn-glycerol + CoA. It catalyses the reaction a long chain fatty alcohol + a fatty acyl-CoA = a wax ester + CoA. The protein operates within glycerolipid metabolism; triacylglycerol biosynthesis. Its function is as follows. Catalyzes the terminal and only committed step in triacylglycerol synthesis by using diacylglycerol and fatty acyl CoA as substrates. Required for storage lipid synthesis. The polypeptide is Probable diacyglycerol O-acyltransferase tgs2 (tgs2) (Mycobacterium tuberculosis (strain CDC 1551 / Oshkosh)).